We begin with the raw amino-acid sequence, 199 residues long: Probable chemoreceptor glutamine deamidase CheD (199 aa).

It belongs to the CheD family.

The catalysed reaction is L-glutaminyl-[protein] + H2O = L-glutamyl-[protein] + NH4(+). Probably deamidates glutamine residues to glutamate on methyl-accepting chemotaxis receptors (MCPs), playing an important role in chemotaxis. The chain is Probable chemoreceptor glutamine deamidase CheD from Cereibacter sphaeroides (strain ATCC 17029 / ATH 2.4.9) (Rhodobacter sphaeroides).